The chain runs to 429 residues: Enolase (429 aa).

(2R)-2-phosphoglycerate is bound at residue Gln-163. Glu-205 functions as the Proton donor in the catalytic mechanism. Residues Asp-242, Glu-286, and Asp-313 each contribute to the Mg(2+) site. (2R)-2-phosphoglycerate contacts are provided by Lys-338, Arg-367, Ser-368, and Lys-389. Lys-338 functions as the Proton acceptor in the catalytic mechanism.

The protein belongs to the enolase family. Mg(2+) is required as a cofactor.

The protein resides in the cytoplasm. It localises to the secreted. The protein localises to the cell surface. It catalyses the reaction (2R)-2-phosphoglycerate = phosphoenolpyruvate + H2O. It participates in carbohydrate degradation; glycolysis; pyruvate from D-glyceraldehyde 3-phosphate: step 4/5. In terms of biological role, catalyzes the reversible conversion of 2-phosphoglycerate (2-PG) into phosphoenolpyruvate (PEP). It is essential for the degradation of carbohydrates via glycolysis. The chain is Enolase from Geotalea uraniireducens (strain Rf4) (Geobacter uraniireducens).